We begin with the raw amino-acid sequence, 277 residues long: Large ribosomal subunit protein uL2 (277 aa).

The interval 223–277 (VVMNPIDHPHGGGEGRTSGGRHPVTPWGKPTKGKKTRSNKSTNKFILISRHKRKK) is disordered.

This sequence belongs to the universal ribosomal protein uL2 family. Part of the 50S ribosomal subunit. Forms a bridge to the 30S subunit in the 70S ribosome.

In terms of biological role, one of the primary rRNA binding proteins. Required for association of the 30S and 50S subunits to form the 70S ribosome, for tRNA binding and peptide bond formation. It has been suggested to have peptidyltransferase activity; this is somewhat controversial. Makes several contacts with the 16S rRNA in the 70S ribosome. The sequence is that of Large ribosomal subunit protein uL2 from Nitrobacter hamburgensis (strain DSM 10229 / NCIMB 13809 / X14).